Consider the following 1958-residue polypeptide: MADRTAPRCQLRLEWVYGYRGHQCRNNLYYTAGKEVVYFVAGVGVVYNTREHSQKFFLGHNDDIISLALHPDKTLVATGQVGKEPYICIWDSYNVQTVSLLKDVHTHGVACLAFDSDGQRLASVGLDAKNTVCIWDWRKGKLLASATGHSDRIFDISWDPYQPNRVVSCGVKHIKFWTLCGNALTAKRGIFGKTGDLQTILCLACAKEDITYSGALNGDIYVWKGLNLVRTIQGAHSAGIFSMYACEEGFATGGRDGCIRLWDTDFKPITKIDLRETEQGYKGLSIRSVCWKADRLLAGTQDSEIFEVIVRERDKPMLILQGHCEGELWALALHPKKPLAVTGSDDRSVRLWSLADHALIARCNMEEAVRSVAFSPDGSQLALGMKDGSFIVLRVRDMTEVVHIKDRKEVIHEMKFSPDGSYLAVGSNDGPVDVYAVAQRYKKIGECSKSLSFITHIDWSLDSKYLQTNDGAGERLFYRMPSGKPLTSKEEIKGIPWASWTCVKGPEVSGIWPKYTEVTDINSVDANYNSSVLVSGDDFGLVKLFKFPCLKRGAKFRKYVGHSAHVTNVRWSHDFQWVLSTGGADHSVFQWRFIPEGVSNGMLETAPQEGGADSYSEESDSDLSDVPELDSDIEQEAQINYDRQVYKEDLPQLKQQSKEKNHAVPFLKREKAPEDSLKLQFIHGYRGYDCRNNLFYTQAGEVVYHIAAVAVVYNRQQHSQRLYLGHDDDILSLTIHPVKDYVATGQVGRDAAIHVWDTQTLKCLSLLKGQHQRGVCALDFSADGKCLVSVGLDDFHSIVFWDWKKGEKIATTRGHKDKIFVVKCNPHHVDKLVTVGIKHIKFWQQAGGGFTSKRGTFGSVGKLETMMCVSYGRMEDLVFSGAATGDIFIWKDILLLKTVKAHDGPVFAMYALDKGFVTGGKDGIVELWDDMFERCLKTYAIKRSALSTSSKGLLLEDNPSIRAITLGHGHILVGTKNGEILEIDKSGPMTLLVQGHMEGEVWGLAAHPLLPICATVSDDKTLRIWELSAQHRMLAVRKLKKGGRCCAFSPDGKALAVGLNDGSFLVVNADTVEDMVSFHHRKEMISDIKFSKDTGKYLAVASHDNFVDIYNVLTSKRVGICKGASSYITHIDWDSRGKLLQVNSGAREQLFFEAPRGKRHIIRPSEIEKIEWDTWTCVLGPTCEGIWPAHSDITDVNAASLTKDCSLLATGDDFGFVKLFSYPVKGQHARFKKYVGHSAHVTNVRWLHNDSVLLTVGGADTALMIWTREFVGTQESKLVDSEESDTDVEEDGGYDSDVAREKAIDYTTKIYAVSIREMEGTKPHQQLKEVSVEERPPVSRAAPQPEKLQKNNITKKKKLVEELALDHVFGYRGFDCRNNLHYLNDGADIIFHTAAAGIVQNLSTGSQSFYLEHTDDILCLTVNQHPKYRNVVATSQIGTTPSIHIWDAMTKHTLSMLRCFHSKGVNYINFSATGKLLVSVGVDPEHTITVWRWQEGAKVASRGGHLERIFVVEFRPDSDTQFVSVGVKHMKFWTLAGSALLYKKGVIGSLGAAKMQTMLSVAFGANNLTFTGAINGDVYVWKDHFLIRLVAKAHTGPVFTMYTTLRDGLIVTGGKERPTKEGGAVKLWDQEMKRCRAFQLETGQLVECVRSVCRGKGKILVGTKDGEIIEVGEKNAASNILIDGHMEGEIWGLATHPSKDLFISASNDGTARIWDLADKKLLNKVSLGHAARCAAYSPDGEMVAIGMKNGEFVILLVNSLKVWGKKRDRKSAIQDIRISPDNRFLAVGSSEHTVDFYDLTQGTNLNRIGYCKDIPSFVIQMDFSADGKYIQVSTGAYKRQVHEVPLGKQVTEAVVIEKITWASWTSVLGDEVIGIWPRNADKADVNCACVTHAGLNIVTGDDFGLVKLFDFPCTEKFAKHKRYFGHSAHVTNIRFSYDDKYVVSTGGDDCSVFVWRCL.

WD repeat units lie at residues 59–100, 104–145, 148–187, 195–233, 235–273, 280–321, 323–362, 364–403, 406–445, and 561–601; these read GHND…TVSL, VHTH…LLAS, GHSD…LTAK, GDLQ…RTIQ, AHSA…TKID, GYKG…LILQ, HCEG…LIAR, NMEE…EVVH, DRKE…KKIG, and GHSA…VSNG. The tract at residues 603–626 is disordered; sequence LETAPQEGGADSYSEESDSDLSDV. Acidic residues predominate over residues 615 to 626; sequence YSEESDSDLSDV. 10 WD repeats span residues 725–766, 770–811, 814–853, 861–900, 901–940, 996–1035, 1038–1077, 1080–1120, 1191–1230, and 1236–1276; these read GHDD…CLSL, QHQR…KIAT, GHKD…FTSK, GKLE…KTVK, AHDG…KTYA, HMEG…RMLA, KLKK…DMVS, HRKE…RVGI, SDIT…QHAR, and GHSA…TQES. Residues 1322–1337 show a composition bias toward basic and acidic residues; that stretch reads KPHQQLKEVSVEERPP. The interval 1322 to 1353 is disordered; it reads KPHQQLKEVSVEERPPVSRAAPQPEKLQKNNI. 10 WD repeats span residues 1412 to 1456, 1460 to 1501, 1504 to 1543, 1553 to 1591, 1593 to 1638, 1685 to 1724, 1726 to 1767, 1768 to 1807, 1880 to 1919, and 1925 to 1958; these read EHTD…TLSM, FHSK…KVAS, GHLE…LLYK, AKMQ…RLVA, AHTG…CRAF, HMEG…LLNK, SLGH…GKKR, DRKS…NLNR, ADKA…KFAK, and GHSA…WRCL.

Belongs to the WD repeat EMAP family.

The protein localises to the cytoplasm. It is found in the cytoskeleton. Its function is as follows. May modify the assembly dynamics of microtubules, such that microtubules are slightly longer, but more dynamic. This is Echinoderm microtubule-associated protein-like 6 (EML6) from Homo sapiens (Human).